Here is a 458-residue protein sequence, read N- to C-terminus: Sushi repeat-containing protein SRPX2 (458 aa).

A signal peptide spans 1-18; sequence MEASITVLLFAFTKVASS. 3 consecutive Sushi domains span residues 62 to 112, 113 to 171, and 255 to 314; these read ATCY…HCRR, IQCH…VCVD, and RRCP…TCTP. 4 cysteine pairs are disulfide-bonded: C64–C98, C84–C110, C115–C156, and C142–C169. The HYR domain maps to 170–254; that stretch reads VDLDPPKIQC…SCKFIVKVQV (85 aa). Cystine bridges form between C257–C299 and C285–C312.

As to quaternary structure, forms homooligomers.

Its subcellular location is the secreted. The protein resides in the cytoplasm. It is found in the cell surface. The protein localises to the synapse. Functionally, may play a role in angiogenesis, synapse formation, cellular migration and adhesion. The protein is Sushi repeat-containing protein SRPX2 (srpx2) of Xenopus laevis (African clawed frog).